The sequence spans 380 residues: Guanine nucleotide-binding protein subunit beta (380 aa).

WD repeat units follow at residues 64 to 94 (GHSGKVYSLDWTPEKNWIVSASQDGRLIVWN), 106 to 136 (LHCPWVMTCAFAPNGQSVACGGLDSACSIFN), 155 to 186 (GHKGYVSSCQYVPDQETRLITSSGDQTCVLWD), 203 to 234 (GHTADVLSLSINSSNSNMFVSGSCDATVRLWD), 247 to 277 (GHEGDINSVKFFPDGQRFGTGSDDGTCRLFD), 296 to 326 (NELPTVTSIAFSISGRLLFAGYSNGDCYVWD), and 342 to 372 (SHEGRISCLGLSSDGSALCTGSWDKNLKIWA).

Belongs to the WD repeat G protein beta family. G proteins are composed of 3 units, alpha, beta and gamma. Interacts with the gamma subunits RGG1 and RGG2.

It is found in the cell membrane. Functionally, guanine nucleotide-binding proteins (G proteins) are involved as modulators or transducers in various transmembrane signaling systems. The beta and gamma chains are required for the GTPase activity, for replacement of GDP by GTP, and for G protein-effector interaction. The chain is Guanine nucleotide-binding protein subunit beta from Oryza sativa subsp. japonica (Rice).